Consider the following 257-residue polypeptide: Imidazole glycerol phosphate synthase subunit HisF (257 aa).

Active-site residues include D12 and D131.

Belongs to the HisA/HisF family. In terms of assembly, heterodimer of HisH and HisF.

It is found in the cytoplasm. It catalyses the reaction 5-[(5-phospho-1-deoxy-D-ribulos-1-ylimino)methylamino]-1-(5-phospho-beta-D-ribosyl)imidazole-4-carboxamide + L-glutamine = D-erythro-1-(imidazol-4-yl)glycerol 3-phosphate + 5-amino-1-(5-phospho-beta-D-ribosyl)imidazole-4-carboxamide + L-glutamate + H(+). It participates in amino-acid biosynthesis; L-histidine biosynthesis; L-histidine from 5-phospho-alpha-D-ribose 1-diphosphate: step 5/9. IGPS catalyzes the conversion of PRFAR and glutamine to IGP, AICAR and glutamate. The HisF subunit catalyzes the cyclization activity that produces IGP and AICAR from PRFAR using the ammonia provided by the HisH subunit. This is Imidazole glycerol phosphate synthase subunit HisF from Kineococcus radiotolerans (strain ATCC BAA-149 / DSM 14245 / SRS30216).